The chain runs to 133 residues: FPRL1 inhibitory protein (133 aa).

The first 28 residues, Met-1–Ala-28, serve as a signal peptide directing secretion.

The protein belongs to the CHIPS/FLIPr family.

It localises to the secreted. May be involved in countering the first line of host defense mechanisms. Impairs the leukocyte response to FPRL1 agonists by binding directly to host FPRL1. This chain is FPRL1 inhibitory protein (flr), found in Staphylococcus aureus (strain Mu50 / ATCC 700699).